We begin with the raw amino-acid sequence, 466 residues long: Asparagine--tRNA ligase (466 aa).

It belongs to the class-II aminoacyl-tRNA synthetase family. In terms of assembly, homodimer.

Its subcellular location is the cytoplasm. The catalysed reaction is tRNA(Asn) + L-asparagine + ATP = L-asparaginyl-tRNA(Asn) + AMP + diphosphate + H(+). In Aliivibrio fischeri (strain ATCC 700601 / ES114) (Vibrio fischeri), this protein is Asparagine--tRNA ligase.